Consider the following 394-residue polypeptide: Large ribosomal subunit protein mL44 (394 aa).

Residues 1–21 (MFRHVAQNLGSRNTSIQSYRL) constitute a mitochondrion transit peptide.

The protein belongs to the ribonuclease III family. Mitochondrion-specific ribosomal protein mL44 subfamily. In terms of assembly, component of the mitochondrial large ribosomal subunit (mt-LSU).

The protein resides in the mitochondrion. Functionally, component of the mitochondrial ribosome. May have a function in the assembly/stability of nascent mitochondrial polypeptides exiting the ribosome. In Caenorhabditis elegans, this protein is Large ribosomal subunit protein mL44.